A 955-amino-acid chain; its full sequence is UPF0182 protein syc2310_c (955 aa).

The next 9 helical transmembrane spans lie at 12-32 (IAAI…TLWF), 45-65 (LAVQ…LIGG), 85-105 (LQLG…LALT), 141-161 (GSWP…LFLW), 163-183 (PWPL…LLTS), 224-244 (FDLW…YYLA), 263-283 (HLVR…WLAQ), 306-326 (LPLL…LFWQ), and 343-363 (AAIA…QLVV).

This sequence belongs to the UPF0182 family.

The protein resides in the cell membrane. This is UPF0182 protein syc2310_c from Synechococcus sp. (strain ATCC 27144 / PCC 6301 / SAUG 1402/1) (Anacystis nidulans).